We begin with the raw amino-acid sequence, 692 residues long: Elongation factor G (692 aa).

A tr-type G domain is found at 8-283; it reads NRIRNIGIAA…AVIDYLPAPT (276 aa). GTP-binding positions include 17-24, 81-85, and 135-138; these read AHIDAGKT, DTPGH, and NKMD.

This sequence belongs to the TRAFAC class translation factor GTPase superfamily. Classic translation factor GTPase family. EF-G/EF-2 subfamily.

The protein resides in the cytoplasm. Functionally, catalyzes the GTP-dependent ribosomal translocation step during translation elongation. During this step, the ribosome changes from the pre-translocational (PRE) to the post-translocational (POST) state as the newly formed A-site-bound peptidyl-tRNA and P-site-bound deacylated tRNA move to the P and E sites, respectively. Catalyzes the coordinated movement of the two tRNA molecules, the mRNA and conformational changes in the ribosome. This chain is Elongation factor G, found in Helicobacter pylori (strain HPAG1).